Here is a 241-residue protein sequence, read N- to C-terminus: Adenylate kinase 3 (241 aa).

Position 38–43 (38–43 (GCGKGT)) interacts with ATP. The NMP stretch occupies residues 58-87 (ATGDMLRAAVAAKTPLGIKAKEAMDKGELV). Residues Thr59, Arg64, 85 to 87 (ELV), 113 to 116 (GFPR), and Gln120 contribute to the AMP site. The tract at residues 154–191 (GRWIHPSSGRSYHTKFAPPKTPGLDDVTGEPLIQRKDD) is LID. Arg155 serves as a coordination point for ATP. AMP is bound by residues Arg188 and Arg199.

This sequence belongs to the adenylate kinase family.

The protein localises to the cytoplasm. The catalysed reaction is AMP + ATP = 2 ADP. Catalyzes the reversible transfer of the terminal phosphate group between ATP and AMP. Plays an important role in cellular energy homeostasis and in adenine nucleotide metabolism. The sequence is that of Adenylate kinase 3 (ADK-A) from Oryza sativa subsp. japonica (Rice).